The sequence spans 547 residues: Chaperonin GroEL (547 aa).

Residues 30 to 33 (TLGP), Lys-51, 87 to 91 (DGTTT), Gly-415, 479 to 481 (NAA), and Asp-495 each bind ATP.

The protein belongs to the chaperonin (HSP60) family. Forms a cylinder of 14 subunits composed of two heptameric rings stacked back-to-back. Interacts with the co-chaperonin GroES.

The protein resides in the cytoplasm. It carries out the reaction ATP + H2O + a folded polypeptide = ADP + phosphate + an unfolded polypeptide.. Its function is as follows. Together with its co-chaperonin GroES, plays an essential role in assisting protein folding. The GroEL-GroES system forms a nano-cage that allows encapsulation of the non-native substrate proteins and provides a physical environment optimized to promote and accelerate protein folding. The chain is Chaperonin GroEL from Acinetobacter baumannii (strain ACICU).